The following is a 348-amino-acid chain: Aldose 1-epimerase (348 aa).

A substrate-binding site is contributed by Arg80. His180 (proton donor) is an active-site residue. Substrate is bound at residue Asp243. Glu311 acts as the Proton acceptor in catalysis.

It belongs to the aldose epimerase family.

It carries out the reaction alpha-D-glucose = beta-D-glucose. Its pathway is carbohydrate metabolism; hexose metabolism. Its function is as follows. Mutarotase converts alpha-aldose to the beta-anomer. It is active on D-glucose, L-arabinose, D-xylose, D-galactose, maltose and lactose. In Streptococcus thermophilus, this protein is Aldose 1-epimerase (galM).